Consider the following 332-residue polypeptide: Ketol-acid reductoisomerase (NADP(+)) (332 aa).

Residues 1-182 (MAQTWKDTDI…GSARAGLIKT (182 aa)) enclose the KARI N-terminal Rossmann domain. NADP(+)-binding positions include 25 to 28 (YGIQ), lysine 48, serine 53, and 83 to 86 (DMIQ). Residue histidine 108 is part of the active site. Glycine 134 contacts NADP(+). A KARI C-terminal knotted domain is found at 183-329 (AFKEEVETDW…KEMRKMMWPD (147 aa)). Mg(2+)-binding residues include aspartate 191, glutamate 195, glutamate 227, and glutamate 231. Serine 252 lines the substrate pocket.

This sequence belongs to the ketol-acid reductoisomerase family. Requires Mg(2+) as cofactor.

The catalysed reaction is (2R)-2,3-dihydroxy-3-methylbutanoate + NADP(+) = (2S)-2-acetolactate + NADPH + H(+). It catalyses the reaction (2R,3R)-2,3-dihydroxy-3-methylpentanoate + NADP(+) = (S)-2-ethyl-2-hydroxy-3-oxobutanoate + NADPH + H(+). It functions in the pathway amino-acid biosynthesis; L-isoleucine biosynthesis; L-isoleucine from 2-oxobutanoate: step 2/4. The protein operates within amino-acid biosynthesis; L-valine biosynthesis; L-valine from pyruvate: step 2/4. Involved in the biosynthesis of branched-chain amino acids (BCAA). Catalyzes an alkyl-migration followed by a ketol-acid reduction of (S)-2-acetolactate (S2AL) to yield (R)-2,3-dihydroxy-isovalerate. In the isomerase reaction, S2AL is rearranged via a Mg-dependent methyl migration to produce 3-hydroxy-3-methyl-2-ketobutyrate (HMKB). In the reductase reaction, this 2-ketoacid undergoes a metal-dependent reduction by NADPH to yield (R)-2,3-dihydroxy-isovalerate. In Nitrosopumilus maritimus (strain SCM1), this protein is Ketol-acid reductoisomerase (NADP(+)).